Here is a 502-residue protein sequence, read N- to C-terminus: 4,4'-diapophytoene desaturase (4,4'-diaponeurosporene-forming) (502 aa).

5 to 17 (VIGAGVTGLAAAA) contacts FAD.

The protein belongs to the carotenoid/retinoid oxidoreductase family. CrtN subfamily.

The enzyme catalyses 15-cis-4,4'-diapophytoene + 3 FAD + 3 H(+) = all-trans-4,4'-diaponeurosporene + 3 FADH2. It participates in carotenoid biosynthesis; staphyloxanthin biosynthesis; staphyloxanthin from farnesyl diphosphate: step 2/5. Functionally, involved in the biosynthesis of the yellow-orange carotenoid staphyloxanthin, which plays a role in the virulence via its protective function against oxidative stress. Catalyzes three successive dehydrogenation reactions that lead to the introduction of three double bonds into 4,4'-diapophytoene (dehydrosqualene), with 4,4'-diapophytofluene and 4,4'-diapo-zeta-carotene as intermediates, and 4,4'-diaponeurosporene (the major deep-yellow pigment in staphylococci strains) as the end product. The polypeptide is 4,4'-diapophytoene desaturase (4,4'-diaponeurosporene-forming) (Staphylococcus aureus (strain MRSA252)).